A 178-amino-acid polypeptide reads, in one-letter code: Probable DNA-directed RNA polymerase subunit delta (178 aa).

In terms of domain architecture, HTH HARE-type spans 14–81; sequence LSLIDVAHFI…GNNTWGLRAW (68 aa). Disordered stretches follow at residues 89 to 122 and 141 to 178; these read EEVQ…DYDD and LDED…PEDK. Composition is skewed to acidic residues over residues 105-122, 141-150, and 161-178; these read DDDD…DYDD, LDEDEDDDDH, and TVED…PEDK.

This sequence belongs to the RpoE family. RNAP is composed of a core of 2 alpha, a beta and a beta' subunits. The core is associated with a delta subunit and one of several sigma factors.

Participates in both the initiation and recycling phases of transcription. In the presence of the delta subunit, RNAP displays an increased specificity of transcription, a decreased affinity for nucleic acids, and an increased efficiency of RNA synthesis because of enhanced recycling. The polypeptide is Probable DNA-directed RNA polymerase subunit delta (Listeria innocua serovar 6a (strain ATCC BAA-680 / CLIP 11262)).